Reading from the N-terminus, the 189-residue chain is CASP-like protein 1U2 (189 aa).

The Cytoplasmic segment spans residues 1 to 24 (MFGSDDSGCHVMDDDVAPPANGSK). A helical membrane pass occupies residues 25 to 45 (AVTLLLRLITLALALTSAVLM). Topologically, residues 46 to 71 (ATASECTIYGLDGATATTVTFKDYQP) are extracellular. A helical membrane pass occupies residues 72-92 (FIYLVGSNIAATILEVAAIYV). Topologically, residues 93–109 (QVGKGDDVEDAPMIPRV) are cytoplasmic. A helical membrane pass occupies residues 110–130 (VLVVVDVAVQMLLYSATGAVF). Over 131 to 158 (AAVMAYGPQISACTGAAGHFCEQVQRSK) the chain is Extracellular. Residues 159 to 179 (IISLAASLSAVLAAVAKDVAL) traverse the membrane as a helical segment. Over 180–189 (PCSVWPHPSS) the chain is Cytoplasmic.

Belongs to the Casparian strip membrane proteins (CASP) family. As to quaternary structure, homodimer and heterodimers.

The protein resides in the cell membrane. The protein is CASP-like protein 1U2 of Sorghum bicolor (Sorghum).